Here is a 59-residue protein sequence, read N- to C-terminus: Large ribosomal subunit protein bL32 (59 aa).

The segment at 1 to 59 (MAVQQNRKTRSKRGMRRSHDALSAAALSTDATTGEVHRRHHVSPDGFYRGKQVVEARDE) is disordered. The segment covering 7–16 (RKTRSKRGMR) has biased composition (basic residues). Residues 21-33 (ALSAAALSTDATT) show a composition bias toward low complexity.

This sequence belongs to the bacterial ribosomal protein bL32 family.

This chain is Large ribosomal subunit protein bL32, found in Marinobacter nauticus (strain ATCC 700491 / DSM 11845 / VT8) (Marinobacter aquaeolei).